Consider the following 47-residue polypeptide: Short transmembrane mitochondrial protein 1 (47 aa).

Residues 7–23 (GFTLGNVVGMYLAQNYD) form a helical membrane-spanning segment.

This sequence belongs to the STMP1 family. In terms of assembly, interacts with components of the ubiquinol-cytochrome c oxidoreductase (cytochrome b-c1 complex, complex III, CIII), such as UQCRC1/QCR1, UQCRC2/QCR2 and UQCR10/QCR9. Interacts with components of the cytochrome c oxidase (mitochondrial respiratory chain complex IV) complex, such as MT-CO2. In terms of tissue distribution, expressed in monocytes and dendritic cells.

The protein localises to the mitochondrion inner membrane. It localises to the mitochondrion outer membrane. Its subcellular location is the mitochondrion intermembrane space. Microprotein involved in mitochondrial respiratory chain complex III (ubiquinol-cytochrome c oxidoreductase) and complex IV (mitochondrial cytochrome c oxidase complex) assembly. Required for the formation of mitochondrial supercomplexes (SCs). Also required for the activation of the NLRP3 inflammasome. This is Short transmembrane mitochondrial protein 1 from Homo sapiens (Human).